Here is a 341-residue protein sequence, read N- to C-terminus: Anthranilate phosphoribosyltransferase (341 aa).

5-phospho-alpha-D-ribose 1-diphosphate-binding positions include Gly-79, 82 to 83 (GD), Thr-87, 89 to 92 (NIST), 107 to 115 (KHGNRAASS), and Ser-119. Position 79 (Gly-79) interacts with anthranilate. Position 91 (Ser-91) interacts with Mg(2+). Position 110 (Asn-110) interacts with anthranilate. Residue Arg-165 coordinates anthranilate. Asp-224 and Glu-225 together coordinate Mg(2+).

Belongs to the anthranilate phosphoribosyltransferase family. In terms of assembly, homodimer. Mg(2+) serves as cofactor.

The catalysed reaction is N-(5-phospho-beta-D-ribosyl)anthranilate + diphosphate = 5-phospho-alpha-D-ribose 1-diphosphate + anthranilate. It functions in the pathway amino-acid biosynthesis; L-tryptophan biosynthesis; L-tryptophan from chorismate: step 2/5. In terms of biological role, catalyzes the transfer of the phosphoribosyl group of 5-phosphorylribose-1-pyrophosphate (PRPP) to anthranilate to yield N-(5'-phosphoribosyl)-anthranilate (PRA). This chain is Anthranilate phosphoribosyltransferase, found in Dehalococcoides mccartyi (strain ATCC BAA-2266 / KCTC 15142 / 195) (Dehalococcoides ethenogenes (strain 195)).